Consider the following 623-residue polypeptide: GATA zinc finger domain-containing protein 6 (623 aa).

3 disordered regions span residues 137 to 156 (IISP…GNNF), 167 to 197 (INNN…TAST), and 245 to 289 (PTTT…TAST). The span at 167 to 179 (INNNSNNNNNNNN) shows a compositional bias: low complexity. Polar residues predominate over residues 185–197 (KQQTSKGSATAST). A GATA-type zinc finger spans residues 320–345 (CHSCGETQTSQWRRGPDGCKSLCNAC). Residues 398-509 (IQQQQQKDDH…SINHNDKLIN (112 aa)) are disordered. Residues 410-482 (LSRPSSFSSQ…TSPTISSESL (73 aa)) show a composition bias toward low complexity. Residues 483–502 (NFSSATNTPTNLSPNLQSIN) are compositionally biased toward polar residues.

The polypeptide is GATA zinc finger domain-containing protein 6 (gtaF) (Dictyostelium discoideum (Social amoeba)).